The following is a 162-amino-acid chain: Retinoic acid receptor responder protein 2 (162 aa).

The first 20 residues, 1–20 (MWQLLLPLALGLGTMGLGRA), serve as a signal peptide directing secretion. Disulfide bonds link C77-C87, C98-C117, and C101-C135. Residues 156 to 162 (FIKALSP) constitute a propeptide that is removed on maturation.

Secreted in an inactive precursor form, prochemerin, which is proteolytically processed by a variety of extracellular proteases to generate forms with differing levels of bioactivity. For example, the removal of five amino acids results in chemerin-157, which exhibits the highest activity, while removal of six amino acids results in chemerin-156 which has slightly less activity. Some proteases are able to cleave at more than one site and chemerin forms may be sequentially processed by different enzymes to modulate activity levels. The coordinated expression and activity of chemerin-modifying enzymes is essential for regulating its bioactivation, inactivation and, consequently, biological function. Cathepsin G cleaves six C-terminal amino acids from prochemerin (chemerin-156), elastase is able to cleave five (chemerin-157), seven (chemerin-155) or ten (chemerin-152), plasmin cleaves four amino acids (chemerin-158), and tryptase cleaves four (chemerin-158) or seven (chemerin-155). Multiple cleavages might be required to fully activate chemerin, with an initial tryptase cleavage resulting in chemerin with low activity (chemerin-158), and a second cleavage by carboxypeptidase N or B producing highly active chemerin (chemerin-157).

The protein localises to the secreted. Functionally, adipocyte-secreted protein (adipokine) that regulates adipogenesis, metabolism and inflammation through activation of the chemokine-like receptor 1 (CMKLR1). Also acts as a ligand for CMKLR2. Can also bind to C-C chemokine receptor-like 2 (CCRL2), but with a lower affinity than it does to CMKLR1 or CMKLR2. Positively regulates adipocyte differentiation, modulates the expression of adipocyte genes involved in lipid and glucose metabolism and might play a role in angiogenesis, a process essential for the expansion of white adipose tissue. Also acts as a pro-inflammatory adipokine, causing an increase in secretion of pro-inflammatory and prodiabetic adipokines, which further impair adipose tissue metabolic function and have negative systemic effects including impaired insulin sensitivity, altered glucose and lipid metabolism, and a decrease in vascular function in other tissues. Can have both pro- and anti-inflammatory properties depending on the modality of enzymatic cleavage by different classes of proteases. Acts as a chemotactic factor for leukocyte populations expressing CMKLR1, particularly immature plasmacytoid dendritic cells, but also immature myeloid DCs, macrophages and natural killer cells. Exerts an anti-inflammatory role by preventing TNF/TNFA-induced VCAM1 expression and monocytes adhesion in vascular endothelial cells. The effect is mediated via inhibiting activation of NF-kappa-B and CRK/p38 through stimulation of AKT1/NOS3 signaling and nitric oxide production. Exhibits an antimicrobial function in the skin. The protein is Retinoic acid receptor responder protein 2 (RARRES2) of Bos taurus (Bovine).